The chain runs to 874 residues: Alanine--tRNA ligase (874 aa).

Histidine 562, histidine 566, cysteine 665, and histidine 669 together coordinate Zn(2+).

This sequence belongs to the class-II aminoacyl-tRNA synthetase family. It depends on Zn(2+) as a cofactor.

The protein resides in the cytoplasm. The catalysed reaction is tRNA(Ala) + L-alanine + ATP = L-alanyl-tRNA(Ala) + AMP + diphosphate. Catalyzes the attachment of alanine to tRNA(Ala) in a two-step reaction: alanine is first activated by ATP to form Ala-AMP and then transferred to the acceptor end of tRNA(Ala). Also edits incorrectly charged Ser-tRNA(Ala) and Gly-tRNA(Ala) via its editing domain. The polypeptide is Alanine--tRNA ligase (Pseudomonas putida (strain ATCC 47054 / DSM 6125 / CFBP 8728 / NCIMB 11950 / KT2440)).